Reading from the N-terminus, the 470-residue chain is ATP synthase subunit beta (470 aa).

155 to 162 (GGAGVGKT) provides a ligand contact to ATP.

The protein belongs to the ATPase alpha/beta chains family. In terms of assembly, F-type ATPases have 2 components, CF(1) - the catalytic core - and CF(0) - the membrane proton channel. CF(1) has five subunits: alpha(3), beta(3), gamma(1), delta(1), epsilon(1). CF(0) has three main subunits: a(1), b(2) and c(9-12). The alpha and beta chains form an alternating ring which encloses part of the gamma chain. CF(1) is attached to CF(0) by a central stalk formed by the gamma and epsilon chains, while a peripheral stalk is formed by the delta and b chains.

The protein resides in the cell membrane. The enzyme catalyses ATP + H2O + 4 H(+)(in) = ADP + phosphate + 5 H(+)(out). Its function is as follows. Produces ATP from ADP in the presence of a proton gradient across the membrane. The catalytic sites are hosted primarily by the beta subunits. This Pectinatus frisingensis protein is ATP synthase subunit beta.